The following is a 1883-amino-acid chain: Endoribonuclease Dicer homolog 1 (1883 aa).

3 disordered regions span residues 71–97 (AESS…PELP), 129–188 (ARKE…DDRR), and 221–262 (RSGT…EKPV). Positions 75 to 96 (PAPPPPPPPPLPEPVPVAPPEL) are enriched in pro residues. Composition is skewed to basic and acidic residues over residues 129–138 (ARKEPRRESH) and 228–262 (ESDR…EKPV). In terms of domain architecture, Helicase ATP-binding spans 274–413 (VLEQAKSRNT…QEDCAIKIRN (140 aa)). 287-294 (LETGAGKT) contributes to the ATP binding site. The short motif at 358 to 361 (DECH) is the DECH box element. Residues 577-604 (KSETSDVEMQNTEKHNTNDLEEGELPDS) are disordered. The region spanning 629-789 (LIKILLKYQH…RTDLSHLDGT (161 aa)) is the Helicase C-terminal domain. The 96-residue stretch at 817-912 (AVGLIHFYCS…LPDRGSGEGE (96 aa)) folds into the Dicer dsRNA-binding fold domain. The segment at 901 to 928 (TLLPDRGSGEGEKTEQNDEGEPLPGTAR) is disordered. Over residues 907–916 (GSGEGEKTEQ) the composition is skewed to basic and acidic residues. A PAZ domain is found at 1163-1296 (HFSDYQNQGK…LPPELCLVHP (134 aa)). RNase III domains follow at residues 1320–1498 (LAVQ…VAGG) and 1538–1686 (FDTL…LDSG). Mg(2+)-binding residues include Glu-1576, Asp-1672, and Glu-1675. DRBM domains are found at residues 1712 to 1775 (HPVR…VLKE) and 1797 to 1872 (FTRQ…LLNR).

This sequence belongs to the helicase family. Dicer subfamily. As to quaternary structure, may interact with ARGONAUTE1 or PINHEAD through their common PAZ domains. Requires Mg(2+) as cofactor. Mn(2+) is required as a cofactor.

It is found in the nucleus. Involved in the RNA silencing pathway. Cleaves double-stranded RNA to produce microRNAs (miRNAs) of 21-24 nucleotides which target the selective destruction of complementary RNAs. Regulates by this way the development of the plant. May not be involved in small interfering RNAs (siRNAs) production. The protein is Endoribonuclease Dicer homolog 1 (DCL1) of Oryza sativa subsp. japonica (Rice).